We begin with the raw amino-acid sequence, 113 residues long: Molt-inhibiting hormone (113 aa).

Residues 1 to 35 (MMSRTESRYSSQRTWLLSMVVLAALWSISVQRATA) form the signal peptide. Intrachain disulfides connect C42–C79, C59–C75, and C62–C88.

The protein belongs to the arthropod CHH/MIH/GIH/VIH hormone family.

The protein resides in the secreted. Inhibits Y-organs where molting hormone (ecdysteroid) is secreted. A molting cycle is initiated when MIH secretion diminishes or stops. The polypeptide is Molt-inhibiting hormone (Metacarcinus magister (Dungeness crab)).